Here is a 341-residue protein sequence, read N- to C-terminus: tRNA N6-adenosine threonylcarbamoyltransferase (341 aa).

H118 and H122 together coordinate Fe cation. Substrate is bound by residues 141–145 (LVSGG), D174, G187, and N281. D309 is a binding site for Fe cation.

The protein belongs to the KAE1 / TsaD family. Requires Fe(2+) as cofactor.

The protein resides in the cytoplasm. The catalysed reaction is L-threonylcarbamoyladenylate + adenosine(37) in tRNA = N(6)-L-threonylcarbamoyladenosine(37) in tRNA + AMP + H(+). Functionally, required for the formation of a threonylcarbamoyl group on adenosine at position 37 (t(6)A37) in tRNAs that read codons beginning with adenine. Is involved in the transfer of the threonylcarbamoyl moiety of threonylcarbamoyl-AMP (TC-AMP) to the N6 group of A37, together with TsaE and TsaB. TsaD likely plays a direct catalytic role in this reaction. The sequence is that of tRNA N6-adenosine threonylcarbamoyltransferase from Desulfitobacterium hafniense (strain Y51).